A 156-amino-acid polypeptide reads, in one-letter code: Cellulose synthase operon protein D (156 aa).

It functions in the pathway glycan metabolism; bacterial cellulose biosynthesis. May have a major role in the perfection of crystallization, involved either in the pore structure itself or in the organization of the pores within the linear array of terminal synthesizing complexes (TCs). This chain is Cellulose synthase operon protein D (acsD), found in Komagataeibacter xylinus (Gluconacetobacter xylinus).